The sequence spans 264 residues: Merozoite surface protein 2 (264 aa).

Positions 1–20 are cleaved as a signal peptide; it reads MKVIKTLSIINFFIFVTFNI. N-linked (GlcNAc...) asparagine glycans are attached at residues asparagine 22 and asparagine 36. Residues 44–190 are polymorphic region; it reads ANEGSNTNSV…PQTAENENPA (147 aa). A disordered region spans residues 46 to 227; sequence EGSNTNSVGA…QKECTDGNKE (182 aa). Repeat copies occupy residues 60 to 91 and 92 to 123. The tract at residues 60–123 is 2 X 32 AA perfects repeats; it reads ADTIASGSQR…GESQTTTPTA (64 aa). Residues 70 to 81 show a composition bias toward low complexity; the sequence is STNSASTSTTNN. Residues 82–101 show a composition bias toward polar residues; the sequence is GESQTTTPTAADTIASGSQR. The span at 102–145 shows a compositional bias: low complexity; sequence STNSASTSTTNNGESQTTTPTAADTPTATESISPSPPITTTESS. Residues 154–166 show a composition bias toward basic and acidic residues; that stretch reads TDGKGEESEKQNE. An N-linked (GlcNAc...) asparagine glycan is attached at asparagine 213. Residues 217–226 are compositionally biased toward basic and acidic residues; the sequence is SQKECTDGNK. A disulfide bridge connects residues cysteine 221 and cysteine 229. A glycan (N-linked (GlcNAc...) asparagine) is linked at asparagine 238. Residue asparagine 238 is the site of GPI-anchor amidated asparagine attachment. The propeptide at 239 to 264 is removed in mature form; the sequence is SSNIASINKFVVLISATLVLSFAIFI.

It localises to the cell membrane. May play a role in the merozoite attachment to the erythrocyte. The polypeptide is Merozoite surface protein 2 (Plasmodium falciparum (isolate FC27 / Papua New Guinea)).